Reading from the N-terminus, the 508-residue chain is MILVLDFGSQYTQLIARRLRESGIYTEIVPFFESIENIQKKAPKGLILSGGPASVYAKDAYKPNGKIFDLNVPILGICYGMQYLVDFFGGVVVGANEQEFGKAVLEITQDSVIFEGVKIKSLVWMSHMDKVIELPKGFTTLAKSPNSPHCAIENGKIFGLQFHPEVIQSEEGGKILENFALLVCGCEKTWGMQHFAQREIARLKEKIANAKVLCAVSGGVDSTVVATLLYRAIKDNLIAVFVDHGLLRKNEKERVQAMFKDLQIPLNTIDAKGIFLSKLKGVSEPELKRKIIGETFIEVFEKEAKKHHLKGKIEFLAQGTLYPDVIESVSVKGPSKVIKTHHNVGGLPEWMDFKLIEPLRELFKDEARLLGKELGVSQDFLMRHPFPGPGLAVRILGEVSESKIKRLQEADFIFIEELKKANLYDKVWQAFCVLLNVNSVGVMGDNRTYENAICLRAVNASDGMTASFSFLEHSFLEKVSNRITNEVSGINRVVYDITSKPPGTIEWE.

The Glutamine amidotransferase type-1 domain occupies 1-189; sequence MILVLDFGSQ…ALLVCGCEKT (189 aa). Catalysis depends on cysteine 78, which acts as the Nucleophile. Residues histidine 163 and glutamate 165 contribute to the active site. The region spanning 190–383 is the GMPS ATP-PPase domain; that stretch reads WGMQHFAQRE…LGVSQDFLMR (194 aa). Residue 217-223 coordinates ATP; that stretch reads SGGVDST.

As to quaternary structure, homodimer.

The catalysed reaction is XMP + L-glutamine + ATP + H2O = GMP + L-glutamate + AMP + diphosphate + 2 H(+). Its pathway is purine metabolism; GMP biosynthesis; GMP from XMP (L-Gln route): step 1/1. Its function is as follows. Catalyzes the synthesis of GMP from XMP. The chain is GMP synthase [glutamine-hydrolyzing] from Helicobacter pylori (strain P12).